Reading from the N-terminus, the 259-residue chain is Leucine-rich repeat-containing protein 3B (259 aa).

The signal sequence occupies residues 1-33; it reads MNLVDLWLTRSLSMCLLLQSFVLMILCFHSASM. Residues 34-64 enclose the LRRNT domain; sequence CPKGCLCSSSGGLNVTCSNANLKEIPRDLPP. Asparagine 47 is a glycosylation site (N-linked (GlcNAc...) asparagine). 3 LRR repeats span residues 65–86, 89–110, and 114–135; these read ETVL…IFKD, QLRV…AFKG, and TLQT…AFNN. Asparagine 94 is a glycosylation site (N-linked (GlcNAc...) asparagine). Residues 145 to 197 form the LRRCT domain; it reads NPWHCDCTLQQVLRSMASNHETAHNVICKTSVLDEHAGRPFLNAANDADLCNL. Residues 205-225 form a helical membrane-spanning segment; sequence AMLVTMFGWFTMVISYVVYYV.

This sequence belongs to the LRRC3 family.

It localises to the membrane. This is Leucine-rich repeat-containing protein 3B (LRRC3B) from Homo sapiens (Human).